Consider the following 93-residue polypeptide: Small ribosomal subunit protein uS19 (93 aa).

This sequence belongs to the universal ribosomal protein uS19 family.

Functionally, protein S19 forms a complex with S13 that binds strongly to the 16S ribosomal RNA. This chain is Small ribosomal subunit protein uS19, found in Leuconostoc citreum (strain KM20).